We begin with the raw amino-acid sequence, 235 residues long: DNA repair protein RecO (235 aa).

The protein belongs to the RecO family.

Functionally, involved in DNA repair and RecF pathway recombination. The chain is DNA repair protein RecO from Enterobacter sp. (strain 638).